The chain runs to 279 residues: Orotidine 5'-phosphate decarboxylase (279 aa).

Residues aspartate 8, lysine 30, 58-67, threonine 117, arginine 177, glutamine 186, glycine 206, and arginine 207 contribute to the substrate site; that span reads DLKIHDIPNT. Lysine 60 acts as the Proton donor in catalysis.

This sequence belongs to the OMP decarboxylase family. Type 1 subfamily. Homodimer.

The enzyme catalyses orotidine 5'-phosphate + H(+) = UMP + CO2. It participates in pyrimidine metabolism; UMP biosynthesis via de novo pathway; UMP from orotate: step 2/2. In terms of biological role, catalyzes the decarboxylation of orotidine 5'-monophosphate (OMP) to uridine 5'-monophosphate (UMP). This is Orotidine 5'-phosphate decarboxylase from Campylobacter jejuni (strain RM1221).